Consider the following 209-residue polypeptide: MEQPRKAVVVTGFGPFGEHAVNASWIAVQELEKLGLGDSVDLHVYEIPVEYQTVQRLIPALWEKHSPQLVVHVGVSGMATTVTLEKCGHNKGYKGLDNCRFCPGSQCCVEDGPESIDSIIDMDAVCKRVTTLGLDVSVTISQDAGRYLCDFTYYTSLYRGRGRSAFVHVPPLGKPYNADQLGRALRAIIEEMLGVLEQAEGDISCCHQL.

Active-site residues include glutamate 85, cysteine 149, and histidine 168.

It belongs to the peptidase C15 family. Monomer.

It localises to the cytoplasm. It catalyses the reaction Release of an N-terminal pyroglutamyl group from a polypeptide, the second amino acid generally not being Pro.. Removes 5-oxoproline from various penultimate amino acid residues except L-proline. This is Pyroglutamyl-peptidase 1 (Pgpep1) from Rattus norvegicus (Rat).